Reading from the N-terminus, the 712-residue chain is uncharacterized protein (712 aa).

Disordered stretches follow at residues 1–46 (MAKI…NNLN), 107–264 (NIKP…IPQA), and 370–389 (QPQHQQNQQNQQNQQNQQNQ). 3 stretches are compositionally biased toward low complexity: residues 10 to 46 (INNSLNLNNSNSNSNSNSSININNNNNSNNSNNNNLN), 107 to 143 (NIKPSQQNSPQNNSNSNNINININNNSNNGNSTSNSS), and 161 to 173 (TFDNQQTSNNSSN). Residues 178–187 (ISPTTSPQLE) show a composition bias toward polar residues. 2 stretches are compositionally biased toward low complexity: residues 188–198 (QHQQYQQQQHQ) and 241–264 (PLQQQQQPQPQQQPQPQQQQIPQA).

This is an uncharacterized protein from Dictyostelium discoideum (Social amoeba).